The following is a 100-amino-acid chain: NADH-quinone oxidoreductase subunit K 2 (100 aa).

3 helical membrane passes run 4 to 24, 28 to 48, and 60 to 80; these read LWWS…GVLL, ILIV…NFIA, and IFAI…LGIL.

This sequence belongs to the complex I subunit 4L family. As to quaternary structure, NDH-1 is composed of 14 different subunits. Subunits NuoA, H, J, K, L, M, N constitute the membrane sector of the complex.

It is found in the cell inner membrane. It catalyses the reaction a quinone + NADH + 5 H(+)(in) = a quinol + NAD(+) + 4 H(+)(out). Its function is as follows. NDH-1 shuttles electrons from NADH, via FMN and iron-sulfur (Fe-S) centers, to quinones in the respiratory chain. The immediate electron acceptor for the enzyme in this species is believed to be ubiquinone. Couples the redox reaction to proton translocation (for every two electrons transferred, four hydrogen ions are translocated across the cytoplasmic membrane), and thus conserves the redox energy in a proton gradient. The polypeptide is NADH-quinone oxidoreductase subunit K 2 (Rhizobium meliloti (strain 1021) (Ensifer meliloti)).